The sequence spans 196 residues: Pyridoxal 5'-phosphate synthase subunit PdxT (196 aa).

46–48 (GES) lines the L-glutamine pocket. Cysteine 78 (nucleophile) is an active-site residue. L-glutamine contacts are provided by residues arginine 110 and 138–139 (IR). Residues histidine 174 and glutamate 176 each act as charge relay system in the active site.

This sequence belongs to the glutaminase PdxT/SNO family. As to quaternary structure, in the presence of PdxS, forms a dodecamer of heterodimers. Only shows activity in the heterodimer.

The catalysed reaction is aldehydo-D-ribose 5-phosphate + D-glyceraldehyde 3-phosphate + L-glutamine = pyridoxal 5'-phosphate + L-glutamate + phosphate + 3 H2O + H(+). The enzyme catalyses L-glutamine + H2O = L-glutamate + NH4(+). Its pathway is cofactor biosynthesis; pyridoxal 5'-phosphate biosynthesis. Its function is as follows. Catalyzes the hydrolysis of glutamine to glutamate and ammonia as part of the biosynthesis of pyridoxal 5'-phosphate. The resulting ammonia molecule is channeled to the active site of PdxS. This Deinococcus radiodurans (strain ATCC 13939 / DSM 20539 / JCM 16871 / CCUG 27074 / LMG 4051 / NBRC 15346 / NCIMB 9279 / VKM B-1422 / R1) protein is Pyridoxal 5'-phosphate synthase subunit PdxT.